The chain runs to 2488 residues: Neuron navigator 2 (2488 aa).

A Calponin-homology (CH) domain is found at Gly-85 to Gln-192. Low complexity-rich tracts occupy residues Gln-194–Ser-204, Gln-221–Gln-247, and Gln-255–Lys-267. Disordered stretches follow at residues Gln-194–Thr-675 and Thr-706–Thr-727. Positions Gly-299 to Tyr-315 are enriched in polar residues. Residues Ser-356–Ser-369 are compositionally biased toward low complexity. Polar residues predominate over residues Lys-384–Met-396. The segment covering Pro-401 to Thr-410 has biased composition (pro residues). The span at Arg-492–Lys-506 shows a compositional bias: polar residues. A coiled-coil region spans residues Leu-498–Ala-531. Over residues Gly-507–Pro-547 the composition is skewed to basic and acidic residues. A compositionally biased stretch (low complexity) spans Met-592–Ser-606. The span at Gly-615–Pro-626 shows a compositional bias: polar residues. Composition is skewed to low complexity over residues Ser-633–Ser-642 and Ser-657–Thr-675. The span at Thr-706–Val-719 shows a compositional bias: polar residues. The stretch at Glu-743–Gln-771 forms a coiled coil. Disordered stretches follow at residues Leu-804–Gly-824, Leu-939–Ser-1151, Lys-1177–Asp-1200, Tyr-1213–Glu-1283, Pro-1295–Thr-1338, Met-1355–Ser-1412, Ser-1440–Lys-1460, Val-1473–Pro-1560, and Ser-1591–Asp-1629. The segment covering Leu-939 to Ser-985 has biased composition (low complexity). Basic and acidic residues predominate over residues Lys-1091–Arg-1102. The segment covering Pro-1130 to Ser-1142 has biased composition (polar residues). The segment covering Ser-1220–Ser-1245 has biased composition (low complexity). The span at Pro-1299–Gln-1309 shows a compositional bias: polar residues. Composition is skewed to low complexity over residues Ser-1363–Ser-1380 and Ser-1388–Ser-1404. Residues Ser-1440–Ile-1456 show a composition bias toward polar residues. Low complexity predominate over residues Leu-1477–Pro-1489. Residues Ser-1480, Ser-1484, and Ser-1488 each carry the phosphoserine modification. 2 stretches are compositionally biased toward basic and acidic residues: residues Arg-1498–Thr-1510 and Thr-1526–Arg-1535. Positions Ser-1549–Pro-1560 are enriched in low complexity. Positions Glu-1686–Val-1773 form a coiled coil. Disordered regions lie at residues Ala-1790 to Ser-1887 and Ala-1951 to Ser-1985. Composition is skewed to polar residues over residues Ser-1800 to Glu-1820, Asn-1875 to Ser-1887, and Glu-1959 to Ser-1985. The stretch at Met-1897–Gly-1964 forms a coiled coil. Residue Ser-1977 is modified to Phosphoserine. Gly-2157–Thr-2164 lines the ATP pocket. The interval Asp-2423–Leu-2488 is disordered. Residues Tyr-2460–Asn-2473 are compositionally biased toward low complexity.

The protein belongs to the Nav/unc-53 family. In terms of tissue distribution, highly expressed in the brain, kidney and liver. Also expressed in the thyroid, mammary gland, spinal cord, heart, placenta and lung. Abundantly expressed in colon cancers.

Its subcellular location is the nucleus. It catalyses the reaction ATP + H2O = ADP + phosphate + H(+). Functionally, possesses 3' to 5' helicase activity and exonuclease activity. Involved in neuronal development, specifically in the development of different sensory organs. The polypeptide is Neuron navigator 2 (NAV2) (Homo sapiens (Human)).